The chain runs to 137 residues: ATP synthase epsilon chain, chloroplastic (137 aa).

It belongs to the ATPase epsilon chain family. F-type ATPases have 2 components, CF(1) - the catalytic core - and CF(0) - the membrane proton channel. CF(1) has five subunits: alpha(3), beta(3), gamma(1), delta(1), epsilon(1). CF(0) has three main subunits: a, b and c.

It localises to the plastid. The protein resides in the chloroplast thylakoid membrane. Its function is as follows. Produces ATP from ADP in the presence of a proton gradient across the membrane. This chain is ATP synthase epsilon chain, chloroplastic, found in Pinus thunbergii (Japanese black pine).